Reading from the N-terminus, the 359-residue chain is Fructose-bisphosphate aldolase, cytoplasmic isozyme 2 (359 aa).

The substrate site is built by arginine 52 and lysine 143. The active-site Proton acceptor is glutamate 184. Catalysis depends on lysine 226, which acts as the Schiff-base intermediate with dihydroxyacetone-P.

It belongs to the class I fructose-bisphosphate aldolase family.

The protein resides in the cytoplasm. It catalyses the reaction beta-D-fructose 1,6-bisphosphate = D-glyceraldehyde 3-phosphate + dihydroxyacetone phosphate. Its pathway is carbohydrate degradation; glycolysis; D-glyceraldehyde 3-phosphate and glycerone phosphate from D-glucose: step 4/4. The chain is Fructose-bisphosphate aldolase, cytoplasmic isozyme 2 from Pisum sativum (Garden pea).